The chain runs to 431 residues: Glutamate-1-semialdehyde 2,1-aminomutase (431 aa).

Lysine 269 carries the post-translational modification N6-(pyridoxal phosphate)lysine.

It belongs to the class-III pyridoxal-phosphate-dependent aminotransferase family. HemL subfamily. Homodimer. Requires pyridoxal 5'-phosphate as cofactor.

It is found in the cytoplasm. It catalyses the reaction (S)-4-amino-5-oxopentanoate = 5-aminolevulinate. The protein operates within porphyrin-containing compound metabolism; protoporphyrin-IX biosynthesis; 5-aminolevulinate from L-glutamyl-tRNA(Glu): step 2/2. Its pathway is porphyrin-containing compound metabolism; chlorophyll biosynthesis. The chain is Glutamate-1-semialdehyde 2,1-aminomutase from Chlorobium chlorochromatii (strain CaD3).